A 413-amino-acid chain; its full sequence is Serine hydroxymethyltransferase (413 aa).

(6S)-5,6,7,8-tetrahydrofolate is bound by residues Leu-117 and 121-123 (GHL). Lys-226 is subject to N6-(pyridoxal phosphate)lysine. (6S)-5,6,7,8-tetrahydrofolate-binding positions include Glu-239 and 349 to 351 (SPF).

Belongs to the SHMT family. As to quaternary structure, homodimer. Pyridoxal 5'-phosphate serves as cofactor.

The protein localises to the cytoplasm. It catalyses the reaction (6R)-5,10-methylene-5,6,7,8-tetrahydrofolate + glycine + H2O = (6S)-5,6,7,8-tetrahydrofolate + L-serine. It functions in the pathway one-carbon metabolism; tetrahydrofolate interconversion. It participates in amino-acid biosynthesis; glycine biosynthesis; glycine from L-serine: step 1/1. Its function is as follows. Catalyzes the reversible interconversion of serine and glycine with tetrahydrofolate (THF) serving as the one-carbon carrier. This reaction serves as the major source of one-carbon groups required for the biosynthesis of purines, thymidylate, methionine, and other important biomolecules. Also exhibits THF-independent aldolase activity toward beta-hydroxyamino acids, producing glycine and aldehydes, via a retro-aldol mechanism. This is Serine hydroxymethyltransferase from Bacillus cereus (strain G9842).